The primary structure comprises 102 residues: MFAVIKTGGKQYRVATNDVITVEKLEAAAGESVTFPVLLLSGETTLVGAPLVEGASVTAEVVEQTRGEKVIAFKKRRRQNSRRKRGHRQDLTVVRITEIATA.

This sequence belongs to the bacterial ribosomal protein bL21 family. Part of the 50S ribosomal subunit. Contacts protein L20.

Its function is as follows. This protein binds to 23S rRNA in the presence of protein L20. This Azorhizobium caulinodans (strain ATCC 43989 / DSM 5975 / JCM 20966 / LMG 6465 / NBRC 14845 / NCIMB 13405 / ORS 571) protein is Large ribosomal subunit protein bL21.